The chain runs to 539 residues: Prolyl 4-hydroxylase subunit alpha-2 (539 aa).

The first 16 residues, 1-16, serve as a signal peptide directing secretion; that stretch reads MRAVLLVCLLAGLAHA. An N-linked (GlcNAc...) asparagine glycan is attached at asparagine 110. The Fe2OG dioxygenase domain occupies 401-509; that stretch reads TSEELQVANY…KWVSNKWIHE (109 aa). Residues histidine 419, aspartate 421, and histidine 490 each coordinate Fe cation. Position 500 (lysine 500) interacts with 2-oxoglutarate.

Belongs to the P4HA family. As to quaternary structure, heterotetramer of two alpha chains and two beta chains. Exist either as a phy-2(2)/pdi-2(2) tetramer or as a phy-1/phy-2/pdi-2(2) tetramer. Fe(2+) is required as a cofactor. L-ascorbate serves as cofactor.

It is found in the endoplasmic reticulum lumen. It carries out the reaction L-prolyl-[collagen] + 2-oxoglutarate + O2 = trans-4-hydroxy-L-prolyl-[collagen] + succinate + CO2. In terms of biological role, catalyzes the post-translational formation of 4-hydroxyproline in -Xaa-Pro-Gly- sequences in collagens and other proteins. This is Prolyl 4-hydroxylase subunit alpha-2 (phy-2) from Caenorhabditis elegans.